The primary structure comprises 259 residues: Insulin-like growth factor-binding protein 4 (259 aa).

Residues 1-22 form the signal peptide; that stretch reads MLPLCLVAALLLSASGPRPSLG. The IGFBP N-terminal domain maps to 24–104; sequence EAIHCPPCSE…MHGQGLCMEL (81 aa). Intrachain disulfides connect Cys-28–Cys-54, Cys-31–Cys-56, Cys-39–Cys-57, Cys-45–Cys-60, Cys-68–Cys-81, and Cys-75–Cys-101. The tract at residues 115 to 136 is disordered; that stretch reads QPSDKDEGDHPNNSFSPCSPQD. Asn-126 is a glycosylation site (N-linked (GlcNAc...) asparagine). 4 disulfide bridges follow: Cys-132–Cys-139, Cys-175–Cys-205, Cys-216–Cys-227, and Cys-229–Cys-250. The region spanning 172 to 250 is the Thyroglobulin type-1 domain; that stretch reads QGSCQSELHR…GLEPKGELDC (79 aa). The residue at position 256 (Ser-256) is a Phosphoserine.

As to quaternary structure, binds IGF2 more than IGF1.

It is found in the secreted. In terms of biological role, IGF-binding proteins prolong the half-life of the IGFs and have been shown to either inhibit or stimulate the growth promoting effects of the IGFs on cell culture. They alter the interaction of IGFs with their cell surface receptors. In Sus scrofa (Pig), this protein is Insulin-like growth factor-binding protein 4 (IGFBP4).